Here is a 406-residue protein sequence, read N- to C-terminus: Protein transport protein HofC homolog (406 aa).

Transmembrane regions (helical) follow at residues 167-187 (MVLGISLLLTLALLLFIVPQF), 214-234 (QNIGILLFFVLSFFLFYYFYL), and 379-399 (MMVIIGSLIGIIMMGMYLPIF).

It belongs to the GSP F family.

The protein resides in the cell inner membrane. This Haemophilus influenzae (strain ATCC 51907 / DSM 11121 / KW20 / Rd) protein is Protein transport protein HofC homolog (hofC).